The primary structure comprises 337 residues: uncharacterized protein (337 aa).

The protein belongs to the mimivirus R69 family.

This is an uncharacterized protein from Acanthamoeba polyphaga mimivirus (APMV).